Reading from the N-terminus, the 565-residue chain is Proline--tRNA ligase (565 aa).

This sequence belongs to the class-II aminoacyl-tRNA synthetase family. ProS type 1 subfamily. In terms of assembly, homodimer.

It is found in the cytoplasm. The enzyme catalyses tRNA(Pro) + L-proline + ATP = L-prolyl-tRNA(Pro) + AMP + diphosphate. Catalyzes the attachment of proline to tRNA(Pro) in a two-step reaction: proline is first activated by ATP to form Pro-AMP and then transferred to the acceptor end of tRNA(Pro). As ProRS can inadvertently accommodate and process non-cognate amino acids such as alanine and cysteine, to avoid such errors it has two additional distinct editing activities against alanine. One activity is designated as 'pretransfer' editing and involves the tRNA(Pro)-independent hydrolysis of activated Ala-AMP. The other activity is designated 'posttransfer' editing and involves deacylation of mischarged Ala-tRNA(Pro). The misacylated Cys-tRNA(Pro) is not edited by ProRS. The polypeptide is Proline--tRNA ligase (Francisella philomiragia subsp. philomiragia (strain ATCC 25017 / CCUG 19701 / FSC 153 / O#319-036)).